Consider the following 1082-residue polypeptide: RNA-directed RNA polymerase (1082 aa).

A RdRp catalytic domain is found at 498 to 670; the sequence is LSYGDVTRYL…ALASLTGCEI (173 aa).

This sequence belongs to the reoviridae RNA-directed RNA polymerase family. Interacts with VP3 (Potential). Interacts with VP2; this interaction activates VP1. Interacts with NSP5; this interaction is probably necessary for the formation of functional virus factories. Interacts with NSP2; this interaction is weak. The cofactor is Mg(2+).

The protein resides in the virion. The catalysed reaction is RNA(n) + a ribonucleoside 5'-triphosphate = RNA(n+1) + diphosphate. RNA-directed RNA polymerase that is involved in both transcription and genome replication. Together with VP3 capping enzyme, forms an enzyme complex positioned near the channels situated at each of the five-fold vertices of the core. Following infection, the outermost layer of the virus is lost, leaving a double-layered particle (DLP) made up of the core and VP6 shell. VP1 then catalyzes the transcription of fully conservative plus-strand genomic RNAs that are extruded through the DLP's channels into the cytoplasm where they function as mRNAs for translation of viral proteins. One copy of each of the viral (+)RNAs is also recruited during core assembly, together with newly synthesized polymerase complexes and VP2. The polymerase of these novo-formed particles catalyzes the synthesis of complementary minus-strands leading to dsDNA formation. To do so, the polymerase specifically recognizes conserved 3' sequence(s) in plus-strand RNA templates. Once dsRNA synthesis is complete, the polymerase switches to the transcriptional mode, thus providing secondary transcription. In Rotavirus C (strain RVC/Pig/United States/Cowden/1980) (RV-C), this protein is RNA-directed RNA polymerase.